Here is a 2596-residue protein sequence, read N- to C-terminus: Protein unc-79 homolog (2596 aa).

Phosphoserine occurs at positions 754 and 758. 6 disordered regions span residues 907-931, 1539-1573, 1594-1632, 1648-1679, 1695-1832, and 1863-1909; these read GPEGEEEENPAAKHGENPGNRTVPS, SQRQNDHHGRSRQNSATRPDNTEIPKNPGTEGFQE, VDSPGKPAPREDLDLIDLSSDSTSGPEKHSILSTSDSDS, EEEEMMNQGNGGALGNNAASSPSIPSQPSVLS, KDFS…FKIQ, and LGEQ…KQIQ. Basic and acidic residues predominate over residues 1594 to 1606; the sequence is VDSPGKPAPREDL. Residues 1662 to 1679 are compositionally biased toward low complexity; the sequence is GNNAASSPSIPSQPSVLS. Over residues 1704–1713 the composition is skewed to polar residues; the sequence is NHQSASNEDS. Positions 1726-1735 are enriched in basic and acidic residues; sequence ELSKSEELRE. Positions 1897-1908 are enriched in polar residues; that stretch reads ETSSHSSISKQI. 2 helical membrane-spanning segments follow: residues 2184 to 2204 and 2426 to 2446; these read LLSFVIQNAVFTLAYLVELCG and CVLHMCSLFHAFIFAQLWTVY.

Belongs to the unc-79 family. In terms of assembly, NALCN complex consists of NALCN and auxiliary subunits, UNC79, UNC80 and NACL1. These auxiliary subunits are essential for the NALCN channel function. UNC80 bridges NALCN to UNC79. Interacts with NALCN. Interacts with UNC80.

It localises to the cell membrane. Functionally, auxiliary subunit of the NALCN sodium channel complex. The NALCN sodium channel complex is a voltage-gated ion channel responsible for the resting Na(+) permeability that controls neuronal excitability. Activated by neuropeptides substance P, neurotensin, and extracellular calcium that regulates neuronal excitability by controlling the sizes of NALCN-dependent sodium-leak current. This Mus musculus (Mouse) protein is Protein unc-79 homolog (Unc79).